Here is a 294-residue protein sequence, read N- to C-terminus: Phosphatidylserine decarboxylase proenzyme (294 aa).

Catalysis depends on charge relay system; for autoendoproteolytic cleavage activity residues D113, H169, and S256. Catalysis depends on S256, which acts as the Schiff-base intermediate with substrate; via pyruvic acid; for decarboxylase activity. Residue S256 is modified to Pyruvic acid (Ser); by autocatalysis.

The protein belongs to the phosphatidylserine decarboxylase family. PSD-B subfamily. Prokaryotic type II sub-subfamily. In terms of assembly, heterodimer of a large membrane-associated beta subunit and a small pyruvoyl-containing alpha subunit. The cofactor is pyruvate. Is synthesized initially as an inactive proenzyme. Formation of the active enzyme involves a self-maturation process in which the active site pyruvoyl group is generated from an internal serine residue via an autocatalytic post-translational modification. Two non-identical subunits are generated from the proenzyme in this reaction, and the pyruvate is formed at the N-terminus of the alpha chain, which is derived from the carboxyl end of the proenzyme. The autoendoproteolytic cleavage occurs by a canonical serine protease mechanism, in which the side chain hydroxyl group of the serine supplies its oxygen atom to form the C-terminus of the beta chain, while the remainder of the serine residue undergoes an oxidative deamination to produce ammonia and the pyruvoyl prosthetic group on the alpha chain. During this reaction, the Ser that is part of the protease active site of the proenzyme becomes the pyruvoyl prosthetic group, which constitutes an essential element of the active site of the mature decarboxylase.

It localises to the cell membrane. The catalysed reaction is a 1,2-diacyl-sn-glycero-3-phospho-L-serine + H(+) = a 1,2-diacyl-sn-glycero-3-phosphoethanolamine + CO2. The protein operates within phospholipid metabolism; phosphatidylethanolamine biosynthesis; phosphatidylethanolamine from CDP-diacylglycerol: step 2/2. Functionally, catalyzes the formation of phosphatidylethanolamine (PtdEtn) from phosphatidylserine (PtdSer). This is Phosphatidylserine decarboxylase proenzyme from Clostridium perfringens (strain SM101 / Type A).